We begin with the raw amino-acid sequence, 358 residues long: tRNA-specific 2-thiouridylase MnmA (358 aa).

ATP contacts are provided by residues A7–S14 and L33. C101 acts as the Nucleophile in catalysis. C101 and C197 are oxidised to a cystine. Residue G125 coordinates ATP. The interaction with tRNA stretch occupies residues K147–Q149. Catalysis depends on C197, which acts as the Cysteine persulfide intermediate.

This sequence belongs to the MnmA/TRMU family.

The protein localises to the cytoplasm. The enzyme catalyses S-sulfanyl-L-cysteinyl-[protein] + uridine(34) in tRNA + AH2 + ATP = 2-thiouridine(34) in tRNA + L-cysteinyl-[protein] + A + AMP + diphosphate + H(+). In terms of biological role, catalyzes the 2-thiolation of uridine at the wobble position (U34) of tRNA, leading to the formation of s(2)U34. The protein is tRNA-specific 2-thiouridylase MnmA of Rickettsia prowazekii (strain Madrid E).